A 234-amino-acid polypeptide reads, in one-letter code: Purine nucleoside phosphorylase DeoD-type (234 aa).

H4 lines the a purine D-ribonucleoside pocket. Phosphate contacts are provided by residues G20, R24, R43, and 87–90 (RIGS). Residues 179–181 (DME) and 203–204 (SD) contribute to the a purine D-ribonucleoside site. D204 acts as the Proton donor in catalysis.

The protein belongs to the PNP/UDP phosphorylase family. In terms of assembly, homohexamer; trimer of homodimers.

The catalysed reaction is a purine D-ribonucleoside + phosphate = a purine nucleobase + alpha-D-ribose 1-phosphate. It catalyses the reaction a purine 2'-deoxy-D-ribonucleoside + phosphate = a purine nucleobase + 2-deoxy-alpha-D-ribose 1-phosphate. Catalyzes the reversible phosphorolytic breakdown of the N-glycosidic bond in the beta-(deoxy)ribonucleoside molecules, with the formation of the corresponding free purine bases and pentose-1-phosphate. The protein is Purine nucleoside phosphorylase DeoD-type of Shewanella oneidensis (strain ATCC 700550 / JCM 31522 / CIP 106686 / LMG 19005 / NCIMB 14063 / MR-1).